The chain runs to 3354 residues: Cadherin-23 (3354 aa).

The N-terminal stretch at M1–G23 is a signal peptide. Residues Q24 to A3064 lie on the Extracellular side of the membrane. Cadherin domains follow at residues H34 to F132, H133 to F236, I237 to F348, N349 to F460, S461 to F561, Q562 to F671, S672 to Y784, K779 to F890, R891 to F995, F996 to F1102, L1103 to F1208, Q1210 to F1313, S1314 to F1418, F1420 to I1527, S1529 to F1634, Q1635 to F1744, P1745 to L1851, L1852 to F1959, T1960 to F2069, S2070 to F2174, L2175 to F2293, G2297 to F2402, D2403 to F2509, S2510 to F2611, P2614 to F2722, S2729 to F2846, and T2847 to F2975. N155 and N206 each carry an N-linked (GlcNAc...) asparagine glycan. 32 N-linked (GlcNAc...) asparagine glycosylation sites follow: N349, N393, N434, N466, N472, N602, N694, N765, N810, N827, N941, N1001, N1018, N1171, N1282, N1315, N1473, N1534, N1651, N1667, N1818, N1857, N1889, N1902, N2014, N2050, N2129, N2168, N2195, N2263, N2357, and N2369. N-linked (GlcNAc...) asparagine glycosylation is found at N2578, N2616, N2749, N2808, N2877, N2896, N2941, and N2981. The chain crosses the membrane as a helical span at residues L3065–L3085. At M3086–L3354 the chain is on the cytoplasmic side.

In terms of assembly, interacts with USH1C and USH1G. antiparallel heterodimer with PCDH15. Isoform C1: Interacts with CAMSAP3; leading to inhibit CAMSAP3 ability to induce microtubule bundle formation. As to expression, in adult animals relatively high levels of expression are found in testis, skeletal muscle, heart, eye and thymus, and lower expression in kidney, lung and brain. Found in the sensory hair cells of the inner ear.

Its subcellular location is the cell membrane. In terms of biological role, cadherins are calcium-dependent cell adhesion proteins. They preferentially interact with themselves in a homophilic manner in connecting cells. CDH23 is required for establishing and/or maintaining the proper organization of the stereocilia bundle of hair cells in the cochlea and the vestibule during late embryonic/early postnatal development. It is part of the functional network formed by USH1C, USH1G, CDH23 and MYO7A that mediates mechanotransduction in cochlear hair cells. Required for normal hearing. The sequence is that of Cadherin-23 (Cdh23) from Mus musculus (Mouse).